The following is a 284-amino-acid chain: L-ribulose-5-phosphate 3-epimerase UlaE (284 aa).

It belongs to the L-ribulose-5-phosphate 3-epimerase family.

The catalysed reaction is L-ribulose 5-phosphate = L-xylulose 5-phosphate. Its pathway is cofactor degradation; L-ascorbate degradation; D-xylulose 5-phosphate from L-ascorbate: step 3/4. Functionally, catalyzes the isomerization of L-xylulose-5-phosphate to L-ribulose-5-phosphate. Is involved in the anaerobic L-ascorbate utilization. In Salmonella choleraesuis (strain SC-B67), this protein is L-ribulose-5-phosphate 3-epimerase UlaE.